The primary structure comprises 1806 residues: MATRVEVGSITPLTAVPGLGEMGKEETLTRTYFLQAGEASGAPPARILEAKSPLRSPARLLPLPRLAPKPFSKEQDVKSPVPSLRPSSTGPSPSGGLSEEPAAKDLDNRMPGLVGQEVGSGEGPRTSSPLFNKAVFLRPSSSTMILFETTKSGPALGKAVSEGAEEAKLGVSGSRPEVAAKPALPTQKPAGTLPRSAPLSQDTKPPVPQEEAGQDHPPSKASSVEDTARPLVEPRPRLKRRPVSAIFTESIQPQKPGPGAAATVGKVPPTPPEKTWVRKPRPLSMDLTARFENKEALLRKVADEGSGPTAGDMAGLERPRAASKLDRDCLVKAEAPLHDPDLDFLEVAKKIRERKEKMLSKPEMGSPRALVGGSSGVTPSNDQSPWEEKAKLDPEPEKAAESPSPRLGRGLELAEVKSRVADGEAAAGGEWASRRSVRKCISLFREDSTLALAVGSESPLATPASPSAAPEPEKGVVSVQERIRGWTAESSEAKPEVRRRTFQARPLSADLTKLFSSSASSNEVKYEKSAELSGEFPKEPREKQKEGHSLDGACIPRSPWKPGTLRDKSRQTEQKVSSNQDPDSCRGGSSVEAPCPSDVTPEDDRSFQTVWATVFEHHVERHTVADQSGRCLSTTPPGDMAHARVSEPRPRPEMGSWLGRDPPDMTKLKKENSRGFDNPETEKLGPTTLLNGELRPYHTPLRDKYPLSENHNNNTFLKHLENPPTSQRIEPRYDIVHAVGERVHSEAISPAPEEKAVTLRSLRSWLSLKDRQLSQEVTPADLECGLEGQAGSVQRASLIWEARGMPEASGPKFGGNCPFPKWTGGAVVSSHKATVAVSEEHCAPGATSVRAIKAAIWESQHEGPEGARSKPGVGARGPPQGCPLDPLSRATNGPSDSQARTHPDAFAVQKGPFIVAAREGDPGPAQVPQPAVRMRKAGAMDQRMDRWRRRTLPPNVKFDTFSSLVPEDSPHVGHRRTDYVSPTASALRKPQLSHYRVETQEVNPGASRDQTSPAVKQGSPVEPKATFFAVTYQIPNTQKAKGVVLSGAESLLEHSRKITPPSSPHSLTSTLVSLGHEEALEMAGSKNWMKGREHENASILKTLKPTDRPSSLGAWSLDPFNGRIIDVDALWSHRGSEDGPRPQSNWKESANKMSPSGGAPQTTPTLRSRPKDLPVRRKTDVISDTFPGKIRDGYRSSVLDIDALMAEYQELSLKVPGEAQERRSPTVEPSTLPRERPVQLGGVEQRRRSLKEMPDTGGLWKPASSAEINHSFTPGLGKQLAETLETAMGTKSSPPFWALPPSAPSERYPGGSPIPADPRKKTGFAEDDRKAFASKHHVAKCQNYLAESKPSGREDPGSGVRVSPKSPPTDQKKGTPRKSTGRGEEDSVAQWGDHPRDCGRVPLDIKRAYSEKGPPANIREGLSIMHEARERRREQPKGRPSLTGENLEAKMGPCWWESGTGDSHKVLPRDLEKEDAPQEKERPLQQVSPVASVPWRSHSFCKDRRSGPFVDQLKQCFSRQPTEPKDTDTLVHEAGSQYGTWTEQCQSGESLATESPDSSATSTRKQPPSSRLSSLSSQTEPTSAGDQYDCSRDQRSTSVDHSSTDLESTDGMEGPPPPDACPEKRVDDFSFIDQTSVLDSSALKTRVQLSKRSRRRAPISHSLRRSRFSESESRSPLEDETDNTWMFKDSTEEKSPRKEESDEEETASKAERTPVSHPQRMPAFPGMDPAVLKAQLHKRPEVDSPGETPSWAPQPKSPKSPFQPGVLGSRVLPSSMDKDERSDEPSPQWLKELKSKKRQSLYENQV.

2 disordered regions span residues 38 to 131 and 158 to 282; these read EASG…SPLF and KAVS…KPRP. The segment covering 51–70 has biased composition (low complexity); that stretch reads KSPLRSPARLLPLPRLAPKP. A phosphoserine mark is found at Ser-52, Ser-56, Ser-79, Ser-87, Ser-88, Ser-92, and Ser-128. The segment covering 82-100 has biased composition (low complexity); it reads PSLRPSSTGPSPSGGLSEE. A compositionally biased stretch (basic and acidic residues) spans 226 to 236; the sequence is DTARPLVEPRP. 2 positions are modified to phosphoserine: Ser-244 and Ser-284. Disordered stretches follow at residues 299 to 320, 355 to 431, 456 to 604, and 627 to 696; these read RKVA…ERPR, KEKM…GGEW, SESP…PEDD, and QSGR…ELRP. Ser-366 is modified (phosphoserine). Thr-378 bears the Phosphothreonine mark. Residue Ser-384 is modified to Phosphoserine. Residues 386 to 400 show a composition bias toward basic and acidic residues; that stretch reads WEEKAKLDPEPEKAA. Ser-404 is subject to Phosphoserine. Residues 412–422 show a composition bias toward basic and acidic residues; sequence ELAEVKSRVAD. Residues 456–470 show a composition bias toward low complexity; that stretch reads SESPLATPASPSAAP. Ser-458 and Ser-508 each carry phosphoserine. The span at 514 to 523 shows a compositional bias: polar residues; the sequence is LFSSSASSNE. 2 stretches are compositionally biased toward basic and acidic residues: residues 524–549 and 564–573; these read VKYE…EGHS and TLRDKSRQTE. Thr-600 is subject to Phosphothreonine. Composition is skewed to basic and acidic residues over residues 641-652 and 661-674; these read AHARVSEPRPRP and DPPD…ENSR. Ser-749 carries the phosphoserine modification. Disordered stretches follow at residues 860-901, 969-989, and 1000-1019; these read QHEG…QART, SPHV…ALRK, and QEVN…KQGS. The span at 889–900 shows a compositional bias: polar residues; sequence RATNGPSDSQAR. A phosphoserine mark is found at Ser-969 and Ser-981. Residues 969–978 are compositionally biased toward basic and acidic residues; sequence SPHVGHRRTD. Thr-1059 bears the Phosphothreonine mark. Ser-1063 and Ser-1154 each carry phosphoserine. The tract at residues 1134–1178 is disordered; it reads RGSEDGPRPQSNWKESANKMSPSGGAPQTTPTLRSRPKDLPVRRK. Residues 1142-1166 are compositionally biased toward polar residues; that stretch reads PQSNWKESANKMSPSGGAPQTTPTL. Thr-1163 carries the phosphothreonine modification. Positions 1169–1178 are enriched in basic and acidic residues; that stretch reads RPKDLPVRRK. Phosphothreonine occurs at positions 1179 and 1185. Disordered stretches follow at residues 1216–1265 and 1291–1493; these read PGEA…PASS and KSSP…VASV. A Phosphoserine modification is found at Ser-1224. Thr-1226 carries the phosphothreonine modification. Composition is skewed to basic and acidic residues over residues 1244–1254 and 1317–1331; these read EQRRRSLKEMP and DPRK…DRKA. A Phosphoserine modification is found at Ser-1366. Composition is skewed to basic and acidic residues over residues 1393–1410 and 1426–1437; these read DHPR…RAYS and HEARERRREQPK. Ser-1441 carries the post-translational modification Phosphoserine. The segment covering 1462–1483 has biased composition (basic and acidic residues); that stretch reads DSHKVLPRDLEKEDAPQEKERP. Phosphoserine is present on residues Ser-1488 and Ser-1506. Disordered stretches follow at residues 1512 to 1627 and 1642 to 1806; these read QLKQ…KRVD and ALKT…ENQV. The span at 1522–1531 shows a compositional bias: basic and acidic residues; it reads TEPKDTDTLV. Residues 1537–1568 are compositionally biased toward polar residues; sequence QYGTWTEQCQSGESLATESPDSSATSTRKQPP. Ser-1555 and Ser-1662 each carry phosphoserine. Residues 1649-1666 show a composition bias toward basic residues; that stretch reads LSKRSRRRAPISHSLRRS. Basic and acidic residues-rich tracts occupy residues 1667–1677 and 1689–1714; these read RFSESESRSPL and DSTE…ERTP. 4 positions are modified to phosphoserine: Ser-1701, Ser-1757, Ser-1760, and Ser-1786. Low complexity predominate over residues 1753 to 1764; it reads PQPKSPKSPFQP.

This is an uncharacterized protein from Homo sapiens (Human).